The following is a 250-amino-acid chain: DNA polymerase sliding clamp (250 aa).

Belongs to the PCNA family. Homotrimer. The subunits circularize to form a toroid; DNA passes through its center. Replication factor C (RFC) is required to load the toroid on the DNA.

In terms of biological role, sliding clamp subunit that acts as a moving platform for DNA processing. Responsible for tethering the catalytic subunit of DNA polymerase and other proteins to DNA during high-speed replication. The chain is DNA polymerase sliding clamp from Methanococcus maripaludis (strain C6 / ATCC BAA-1332).